Here is a 133-residue protein sequence, read N- to C-terminus: ATP synthase epsilon chain, chloroplastic (133 aa).

Belongs to the ATPase epsilon chain family. In terms of assembly, F-type ATPases have 2 components, CF(1) - the catalytic core - and CF(0) - the membrane proton channel. CF(1) has five subunits: alpha(3), beta(3), gamma(1), delta(1), epsilon(1). CF(0) has three main subunits: a, b and c.

It is found in the plastid. Its subcellular location is the chloroplast thylakoid membrane. In terms of biological role, produces ATP from ADP in the presence of a proton gradient across the membrane. This chain is ATP synthase epsilon chain, chloroplastic, found in Thalassiosira pseudonana (Marine diatom).